Here is a 341-residue protein sequence, read N- to C-terminus: NADH-quinone oxidoreductase subunit H 1 (341 aa).

9 helical membrane passes run 7–27, 46–66, 80–100, 111–131, 157–177, 183–203, 244–264, 273–293, and 305–325; these read IILT…ISLL, PNVV…KYIF, FFLA…VIPF, VAIL…IMGG, LGLI…SHIV, AFGL…LFFI, YIAI…GWLS, VFWM…VKAI, and IGWK…AFLA.

This sequence belongs to the complex I subunit 1 family. NDH-1 is composed of 14 different subunits. Subunits NuoA, H, J, K, L, M, N constitute the membrane sector of the complex.

It is found in the cell inner membrane. It carries out the reaction a quinone + NADH + 5 H(+)(in) = a quinol + NAD(+) + 4 H(+)(out). In terms of biological role, NDH-1 shuttles electrons from NADH, via FMN and iron-sulfur (Fe-S) centers, to quinones in the respiratory chain. The immediate electron acceptor for the enzyme in this species is believed to be ubiquinone. Couples the redox reaction to proton translocation (for every two electrons transferred, four hydrogen ions are translocated across the cytoplasmic membrane), and thus conserves the redox energy in a proton gradient. This subunit may bind ubiquinone. In Cereibacter sphaeroides (strain ATCC 17029 / ATH 2.4.9) (Rhodobacter sphaeroides), this protein is NADH-quinone oxidoreductase subunit H 1.